The following is a 62-amino-acid chain: Cytochrome b-c1 complex subunit 6-2, mitochondrial (62 aa).

Disulfide bonds link Cys-17–Cys-59 and Cys-31–Cys-45.

Belongs to the UQCRH/QCR6 family. As to quaternary structure, component of the ubiquinol-cytochrome c oxidoreductase (cytochrome b-c1 complex, complex III, CIII), a multisubunit enzyme composed of 10 subunits. The complex is composed of 3 respiratory subunits cytochrome b (MT-CYB), cytochrome c1 (CYC1-1 or CYC1-2) and Rieske protein (UCR1-1 or UCR1-2), 2 core protein subunits MPPalpha1 (or MPPalpha2) and MPPB, and 5 low-molecular weight protein subunits QCR7-1 (or QCR7-2), UCRQ-1 (or UCRQ-2), QCR9, UCRY and probably QCR6-1 (or QCR6-2). The complex exists as an obligatory dimer and forms supercomplexes (SCs) in the inner mitochondrial membrane with NADH-ubiquinone oxidoreductase (complex I, CI), resulting in different assemblies (supercomplexes SCI(1)III(2) and SCI(2)III(4)).

It localises to the mitochondrion inner membrane. Its function is as follows. Component of the ubiquinol-cytochrome c oxidoreductase, a multisubunit transmembrane complex that is part of the mitochondrial electron transport chain which drives oxidative phosphorylation. The respiratory chain contains 3 multisubunit complexes succinate dehydrogenase (complex II, CII), ubiquinol-cytochrome c oxidoreductase (cytochrome b-c1 complex, complex III, CIII) and cytochrome c oxidase (complex IV, CIV), that cooperate to transfer electrons derived from NADH and succinate to molecular oxygen, creating an electrochemical gradient over the inner membrane that drives transmembrane transport and the ATP synthase. The cytochrome b-c1 complex catalyzes electron transfer from ubiquinol to cytochrome c, linking this redox reaction to translocation of protons across the mitochondrial inner membrane, with protons being carried across the membrane as hydrogens on the quinol. In the process called Q cycle, 2 protons are consumed from the matrix, 4 protons are released into the intermembrane space and 2 electrons are passed to cytochrome c. In Arabidopsis thaliana (Mouse-ear cress), this protein is Cytochrome b-c1 complex subunit 6-2, mitochondrial (QCR6-2).